We begin with the raw amino-acid sequence, 256 residues long: Trans-aconitate 2-methyltransferase (256 aa).

This sequence belongs to the methyltransferase superfamily. Tam family.

The protein resides in the cytoplasm. The enzyme catalyses trans-aconitate + S-adenosyl-L-methionine = (E)-3-(methoxycarbonyl)pent-2-enedioate + S-adenosyl-L-homocysteine. Catalyzes the S-adenosylmethionine monomethyl esterification of trans-aconitate. The chain is Trans-aconitate 2-methyltransferase from Rhizobium leguminosarum bv. trifolii (strain WSM2304).